Consider the following 103-residue polypeptide: Small ribosomal subunit protein uS10 (103 aa).

The protein belongs to the universal ribosomal protein uS10 family. In terms of assembly, part of the 30S ribosomal subunit.

In terms of biological role, involved in the binding of tRNA to the ribosomes. The polypeptide is Small ribosomal subunit protein uS10 (Tolumonas auensis (strain DSM 9187 / NBRC 110442 / TA 4)).